Here is a 282-residue protein sequence, read N- to C-terminus: NADPH-dependent 7-cyano-7-deazaguanine reductase (282 aa).

Residue 88–90 (IES) coordinates substrate. An NADPH-binding site is contributed by 90–91 (SK). The active-site Thioimide intermediate is C190. The Proton donor role is filled by D197. Residue 229–230 (HE) coordinates substrate. NADPH is bound at residue 258 to 259 (RG).

Belongs to the GTP cyclohydrolase I family. QueF type 2 subfamily. In terms of assembly, homodimer.

The protein localises to the cytoplasm. It carries out the reaction 7-aminomethyl-7-carbaguanine + 2 NADP(+) = 7-cyano-7-deazaguanine + 2 NADPH + 3 H(+). The protein operates within tRNA modification; tRNA-queuosine biosynthesis. Functionally, catalyzes the NADPH-dependent reduction of 7-cyano-7-deazaguanine (preQ0) to 7-aminomethyl-7-deazaguanine (preQ1). The polypeptide is NADPH-dependent 7-cyano-7-deazaguanine reductase (Salmonella heidelberg (strain SL476)).